The following is a 447-amino-acid chain: Phosphoglucosamine mutase (447 aa).

The active-site Phosphoserine intermediate is the Ser104. The Mg(2+) site is built by Ser104, Asp243, Asp245, and Asp247. The residue at position 104 (Ser104) is a Phosphoserine.

It belongs to the phosphohexose mutase family. It depends on Mg(2+) as a cofactor. In terms of processing, activated by phosphorylation.

It carries out the reaction alpha-D-glucosamine 1-phosphate = D-glucosamine 6-phosphate. Its function is as follows. Catalyzes the conversion of glucosamine-6-phosphate to glucosamine-1-phosphate. This is Phosphoglucosamine mutase from Corynebacterium glutamicum (strain R).